The chain runs to 128 residues: Ribonuclease P protein component 4 (128 aa).

Residues C63, C66, C92, and C95 each contribute to the Zn(2+) site.

This sequence belongs to the eukaryotic/archaeal RNase P protein component 4 family. In terms of assembly, consists of a catalytic RNA component and at least 4 protein subunits. Forms a subcomplex with Rnp1 which stimulates the catalytic RNA. Zn(2+) is required as a cofactor.

The protein localises to the cytoplasm. The enzyme catalyses Endonucleolytic cleavage of RNA, removing 5'-extranucleotides from tRNA precursor.. Part of ribonuclease P, a protein complex that generates mature tRNA molecules by cleaving their 5'-ends. This chain is Ribonuclease P protein component 4, found in Methanocaldococcus jannaschii (strain ATCC 43067 / DSM 2661 / JAL-1 / JCM 10045 / NBRC 100440) (Methanococcus jannaschii).